Here is a 101-residue protein sequence, read N- to C-terminus: Small ribosomal subunit protein uS14 (101 aa).

This sequence belongs to the universal ribosomal protein uS14 family. In terms of assembly, part of the 30S ribosomal subunit. Contacts proteins S3 and S10.

Functionally, binds 16S rRNA, required for the assembly of 30S particles and may also be responsible for determining the conformation of the 16S rRNA at the A site. The protein is Small ribosomal subunit protein uS14 of Chromohalobacter salexigens (strain ATCC BAA-138 / DSM 3043 / CIP 106854 / NCIMB 13768 / 1H11).